The chain runs to 279 residues: Energy-coupling factor transporter ATP-binding protein EcfA1 (279 aa).

The 235-residue stretch at 6–240 (VEFRNVSFRY…KDALREIGLD (235 aa)) folds into the ABC transporter domain. ATP is bound at residue 40–47 (GHNGSGKS).

The protein belongs to the ABC transporter superfamily. Energy-coupling factor EcfA family. Forms a stable energy-coupling factor (ECF) transporter complex composed of 2 membrane-embedded substrate-binding proteins (S component), 2 ATP-binding proteins (A component) and 2 transmembrane proteins (T component).

Its subcellular location is the cell membrane. Its function is as follows. ATP-binding (A) component of a common energy-coupling factor (ECF) ABC-transporter complex. Unlike classic ABC transporters this ECF transporter provides the energy necessary to transport a number of different substrates. This is Energy-coupling factor transporter ATP-binding protein EcfA1 from Oceanobacillus iheyensis (strain DSM 14371 / CIP 107618 / JCM 11309 / KCTC 3954 / HTE831).